A 254-amino-acid polypeptide reads, in one-letter code: uncharacterized protein (254 aa).

Residues 6–239 (LSVDGVEFAY…NIKAVYGVDA (234 aa)) form the ABC transporter domain. An ATP-binding site is contributed by 38 to 45 (GVNGAGKS).

Belongs to the ABC transporter superfamily.

This is an uncharacterized protein from Methanocaldococcus jannaschii (strain ATCC 43067 / DSM 2661 / JAL-1 / JCM 10045 / NBRC 100440) (Methanococcus jannaschii).